The sequence spans 66 residues: MSLELLSQLETKIQATLENIELLKMELEEEKQKSTQLAEKNQKLQQDLNSWSDKVNGLVGLLNSEI.

The stretch at 3-59 (LELLSQLETKIQATLENIELLKMELEEEKQKSTQLAEKNQKLQQDLNSWSDKVNGLV) forms a coiled coil.

The protein belongs to the ZapB family. As to quaternary structure, homodimer. The ends of the coiled-coil dimer bind to each other, forming polymers. Interacts with FtsZ.

The protein localises to the cytoplasm. Its function is as follows. Non-essential, abundant cell division factor that is required for proper Z-ring formation. It is recruited early to the divisome by direct interaction with FtsZ, stimulating Z-ring assembly and thereby promoting cell division earlier in the cell cycle. Its recruitment to the Z-ring requires functional FtsA or ZipA. The sequence is that of Cell division protein ZapB from Shewanella denitrificans (strain OS217 / ATCC BAA-1090 / DSM 15013).